A 296-amino-acid chain; its full sequence is Homoserine kinase (296 aa).

92–102 (PQSRGLGSSAA) serves as a coordination point for ATP.

The protein belongs to the GHMP kinase family. Homoserine kinase subfamily.

The protein localises to the cytoplasm. The catalysed reaction is L-homoserine + ATP = O-phospho-L-homoserine + ADP + H(+). Its pathway is amino-acid biosynthesis; L-threonine biosynthesis; L-threonine from L-aspartate: step 4/5. Its function is as follows. Catalyzes the ATP-dependent phosphorylation of L-homoserine to L-homoserine phosphate. In Cutibacterium acnes (strain DSM 16379 / KPA171202) (Propionibacterium acnes), this protein is Homoserine kinase.